The primary structure comprises 399 residues: Yellow-related salivary protein LJM11 (399 aa).

An N-terminal signal peptide occupies residues 1 to 18 (MKVFFSIFTLVLFQGTLG). A disulfide bond links cysteine 115 and cysteine 186. Asparagine 213 is a glycosylation site (N-linked (GlcNAc...) asparagine). Cysteine 319 and cysteine 395 are disulfide-bonded. Serotonin is bound by residues threonine 345, asparagine 360, and phenylalanine 362.

It belongs to the major royal jelly protein family. In terms of tissue distribution, salivary gland (at protein level).

It is found in the secreted. Its function is as follows. Probably modulates blood feeding of sand flies on vertebrate species by binding and sequestering different mediators involved in the host response. Binds biogenic amines. Binds serotonin with high affinity. Binds adrenaline and noradrenaline. Binds dopamine and octopamine. Poorly binds histamine. Induces a delayed type hypersensitivity response in host tissues. Induces systemic Th1 immune response in the host. Immunogenic; elicits antibody production in the host. Functions as a chemoattractant for host neutrophils; likely acts through a G-protein-coupled receptor and effect is dependent on calcium influx. In terms of biological role, (Microbial infection) Modulates infection caused by Leishmania species in the host. The polypeptide is Yellow-related salivary protein LJM11 (Lutzomyia longipalpis (Sand fly)).